The primary structure comprises 571 residues: Adenine deaminase (571 aa).

Belongs to the metallo-dependent hydrolases superfamily. Adenine deaminase family. It depends on Mn(2+) as a cofactor.

The enzyme catalyses adenine + H2O + H(+) = hypoxanthine + NH4(+). The chain is Adenine deaminase from Dehalococcoides mccartyi (strain ATCC BAA-2100 / JCM 16839 / KCTC 5957 / BAV1).